A 401-amino-acid chain; its full sequence is Phosphoglycerate kinase, cytosolic (401 aa).

Residues V24, D25, N27, R41, S63, H64, G66, R67, R122, H154, and R155 each coordinate (2R)-3-phosphoglycerate. G200 contributes to the ADP binding site. G200 provides a ligand contact to CDP. AMP-binding residues include K202 and K206. K206 contacts ATP. Position 224 (G224) interacts with ADP. G224 is a binding site for CDP. Residues G225 and G297 each contribute to the AMP site. The ATP site is built by G225 and G297. CDP contacts are provided by G322 and F327. F327 is an ADP binding site. E328 contributes to the AMP binding site. ATP is bound by residues E328, D359, and S360. A Mg(2+)-binding site is contributed by D359.

Belongs to the phosphoglycerate kinase family. In terms of assembly, monomer. The cofactor is Mg(2+).

It localises to the cytoplasm. It carries out the reaction (2R)-3-phosphoglycerate + ATP = (2R)-3-phospho-glyceroyl phosphate + ADP. It functions in the pathway carbohydrate degradation; glycolysis; pyruvate from D-glyceraldehyde 3-phosphate: step 2/5. The protein is Phosphoglycerate kinase, cytosolic of Nicotiana tabacum (Common tobacco).